A 471-amino-acid chain; its full sequence is 3-isopropylmalate dehydratase large subunit (471 aa).

Cys-347, Cys-407, and Cys-410 together coordinate [4Fe-4S] cluster.

It belongs to the aconitase/IPM isomerase family. LeuC type 1 subfamily. As to quaternary structure, heterodimer of LeuC and LeuD. [4Fe-4S] cluster is required as a cofactor.

It carries out the reaction (2R,3S)-3-isopropylmalate = (2S)-2-isopropylmalate. Its pathway is amino-acid biosynthesis; L-leucine biosynthesis; L-leucine from 3-methyl-2-oxobutanoate: step 2/4. In terms of biological role, catalyzes the isomerization between 2-isopropylmalate and 3-isopropylmalate, via the formation of 2-isopropylmaleate. The sequence is that of 3-isopropylmalate dehydratase large subunit from Acaryochloris marina (strain MBIC 11017).